Here is a 986-residue protein sequence, read N- to C-terminus: Zinc finger protein 445 (986 aa).

Positions 52–134 constitute an SCAN box domain; sequence RQLFRQLRYH…ALLEELQRDL (83 aa). Positions 219 to 289 constitute a KRAB domain; that stretch reads LTFQDVEVTF…NICTVQLKRD (71 aa). Glycyl lysine isopeptide (Lys-Gly) (interchain with G-Cter in SUMO2) cross-links involve residues Lys-302, Lys-360, and Lys-385. Positions 433 to 460 are disordered; that stretch reads QNTGLKENGKDRYGETSRKSWHAHPEHR. Positions 439-460 are enriched in basic and acidic residues; the sequence is ENGKDRYGETSRKSWHAHPEHR. 2 C2H2-type zinc fingers span residues 470–492 and 498–520; these read FQCR…EKIH and YQCS…QKTH. Lys-524 participates in a covalent cross-link: Glycyl lysine isopeptide (Lys-Gly) (interchain with G-Cter in SUMO2). 2 C2H2-type zinc fingers span residues 553–575 and 581–604; these read LHCN…QRIH and YKCT…KLHH. A Glycyl lysine isopeptide (Lys-Gly) (interchain with G-Cter in SUMO2) cross-link involves residue Lys-609. 2 consecutive C2H2-type zinc fingers follow at residues 634-656 and 662-686; these read FPCQ…QRIH and YQCS…RTQH. Lys-691 is covalently cross-linked (Glycyl lysine isopeptide (Lys-Gly) (interchain with G-Cter in SUMO2)). 4 C2H2-type zinc fingers span residues 718–740, 746–768, 796–818, and 824–846; these read NKCK…ERVH, YQCR…QRKH, FWCQ…KGIH, and FKCN…QRIH. A Glycyl lysine isopeptide (Lys-Gly) (interchain with G-Cter in SUMO2) cross-link involves residue Lys-929. C2H2-type zinc fingers lie at residues 933–955 and 961–983; these read HKCS…KRCH and FKCI…MKNH.

Belongs to the krueppel C2H2-type zinc-finger protein family.

Its subcellular location is the nucleus. Its function is as follows. Transcription regulator required to maintain maternal and paternal gene imprinting, a process by which gene expression is restricted in a parent of origin-specific manner by epigenetic modification of genomic DNA and chromatin, including DNA methylation. Acts by controlling DNA methylation during the earliest multicellular stages of development at multiple imprinting control regions (ICRs). Acts together with ZFP57, but ZFP57 plays the predominant role in imprinting maintenance. In contrast, ZNF445 seems to be the major factor in human early embryonic imprinting maintenance. This chain is Zinc finger protein 445 (Znf445), found in Mus musculus (Mouse).